The chain runs to 987 residues: MPDIPTKRRLSNGSVIDNTNKRQMQSSFVPEVEQESDGYLSEDSSDQPIFDMAVAANSNQWQETITKVVKSVVSIQFTHVSNFDTESSIVSEATGFVVDAKRGLILTNRHVVGPGPFCGYVVFDNHEEAVVKPIYRDPVHDFGFLQFDAKSIKYMDVTQLELKPDLAKVGTEIRVVGNDAGEKLSILAGFISRLDRNAPDYGALTYNDFNTEYIQAAASASGGSSGSPVVNEDGHAVAIQAGGSSEASTDFFLPVYRPLRALRCIQESQPITRGDIQVEWSLKPFDECRRLGLTSEAERIARERFPDKIGLLVAELVLPEGPADELIKEGDTLISINDEPISTFIKVDEILDESVGKELKVVIQRGGEEITQTIKIGDLHSITPDRYVDVAGASFNQMSYQVARCYCIPVKGVYINDASGSFEFSTFEKTGWLLETVDDKQTPDLDTFIEVMKQIPDRQKVTITYRHVSDLHTESIQVIYIERHWQSTFRLAVRNDKSGLWDFTDIQDKPLPPLKLEPQNAKYINIPFENEEKQGCASLVKSFVQVRTVAPVPMDSYPYRKEIGYGVVVDATNGYVLVSRRFVPHDMCDIFVIFAESVDIPGKVVFLHPNQNYAIIKYDPKLVLADVQAPKFSDKPLKRGEKSFFVGYNYNLRLVTEDVKVSGISSLNVPAASLSPRYRGTNLECVLLDSKLCQECDSGVLADEDGTLRSFWLSYLGESNCDQTTDRMYRMGLDVTDVLDVINKLKDNEIPVDLRILDAEFSSITILQGRTRGVPQKWINEFEKVCHDELKFLSVERVAAAKLNQTPNPLKIGDILLSVNGSIVKTMRDLKIMYNKPSLDFKIIRSKKEMDITVPTVETTSLNTSHVVFWCGAILQAPHHGVRQLMEKIPSEVYVTRKNSGGPAHQYGIVTNSFITHVNDKETKNLESFMDAITDIADNTYIKLRLVSFDNVPVAISVKTNYHYFPTAELKKNKETGEWKEIEHKEK.

Residues 1–29 (MPDIPTKRRLSNGSVIDNTNKRQMQSSFV) are disordered. The segment covering 11 to 28 (SNGSVIDNTNKRQMQSSF) has biased composition (polar residues). A serine protease region spans residues 69–262 (VKSVVSIQFT…LPVYRPLRAL (194 aa)). Residues His110, Asp141, and Ser224 each act as charge relay system in the active site. PDZ domains follow at residues 279-364 (EWSL…VVIQ) and 878-950 (PHHG…VSFD).

Belongs to the peptidase S1C family.

Its subcellular location is the nucleus. Functionally, nuclear serine protease which mediates apoptosis. The chain is Pro-apoptotic serine protease NMA111 (NMA111) from Debaryomyces hansenii (strain ATCC 36239 / CBS 767 / BCRC 21394 / JCM 1990 / NBRC 0083 / IGC 2968) (Yeast).